The primary structure comprises 335 residues: DNA primase small subunit PriS (335 aa).

Active-site residues include Asp96, Asp98, and Asp243.

The protein belongs to the eukaryotic-type primase small subunit family. Heterodimer of a small subunit (PriS) and a large subunit (PriL). The cofactor is Mg(2+). Mn(2+) is required as a cofactor.

Catalytic subunit of DNA primase, an RNA polymerase that catalyzes the synthesis of short RNA molecules used as primers for DNA polymerase during DNA replication. The small subunit contains the primase catalytic core and has DNA synthesis activity on its own. Binding to the large subunit stabilizes and modulates the activity, increasing the rate of DNA synthesis while decreasing the length of the DNA fragments, and conferring RNA synthesis capability. The DNA polymerase activity may enable DNA primase to also catalyze primer extension after primer synthesis. May also play a role in DNA repair. This chain is DNA primase small subunit PriS, found in Archaeoglobus fulgidus (strain ATCC 49558 / DSM 4304 / JCM 9628 / NBRC 100126 / VC-16).